A 438-amino-acid polypeptide reads, in one-letter code: Serine hydroxymethyltransferase (438 aa).

Residues Leu133 and 137–139 each bind (6S)-5,6,7,8-tetrahydrofolate; that span reads GHL. The residue at position 242 (Lys242) is an N6-(pyridoxal phosphate)lysine.

The protein belongs to the SHMT family. In terms of assembly, homodimer. The cofactor is pyridoxal 5'-phosphate.

It is found in the cytoplasm. It carries out the reaction (6R)-5,10-methylene-5,6,7,8-tetrahydrofolate + glycine + H2O = (6S)-5,6,7,8-tetrahydrofolate + L-serine. It functions in the pathway one-carbon metabolism; tetrahydrofolate interconversion. The protein operates within amino-acid biosynthesis; glycine biosynthesis; glycine from L-serine: step 1/1. Catalyzes the reversible interconversion of serine and glycine with tetrahydrofolate (THF) serving as the one-carbon carrier. This reaction serves as the major source of one-carbon groups required for the biosynthesis of purines, thymidylate, methionine, and other important biomolecules. Also exhibits THF-independent aldolase activity toward beta-hydroxyamino acids, producing glycine and aldehydes, via a retro-aldol mechanism. In Brucella abortus (strain S19), this protein is Serine hydroxymethyltransferase.